Here is a 126-residue protein sequence, read N- to C-terminus: Protein MGF 100-1R (126 aa).

It belongs to the asfivirus MGF 100 family.

Its function is as follows. Plays a role in virus cell tropism, and may be required for efficient virus replication in macrophages. The chain is Protein MGF 100-1R from Ornithodoros (relapsing fever ticks).